The sequence spans 199 residues: Inner membrane-spanning protein YciB (199 aa).

The next 5 membrane-spanning stretches (helical) occupy residues 3-23 (LLID…WGIY), 47-67 (VEPM…ATLL), 76-96 (WKPS…QLVF), 119-139 (LNWS…VIAY), and 149-169 (FKLF…AIYM). The tract at residues 180-199 (AAAATPDALPPPGVQQDKQP) is disordered.

The protein belongs to the YciB family.

The protein localises to the cell inner membrane. Plays a role in cell envelope biogenesis, maintenance of cell envelope integrity and membrane homeostasis. This is Inner membrane-spanning protein YciB from Delftia acidovorans (strain DSM 14801 / SPH-1).